Reading from the N-terminus, the 930-residue chain is MAEVTVNELATSIGAPVERLLKQMQEAGLQHKTASAKVSDEEKQRLLAYLKGSHGEAAVEPRKITLQRKTTTTIKTGTGNAKKTVNVEVRKKRTYVKREDDVVDNTQAAQSQEQDDELASTVVEEVQQAEPSVVPVVDVAPEPEPEPVVEEVDVAAEEAEPVEAAVDTSAPTRFSFTDGIEEKRRAAIERRQAEEAARQAELKAIEEAKRAAEEAKRTQPRAEKPADKSAAAGKGAKPDNRQPAKGKQAPVAVPVEREDAKHGHGHKKHHHGRNDDDFDDDSADRGNKRGAGKAVKKAAAPKKSSKIDLLDFVGDDSEDSDVLARRSHIRAHHKKNNKHAFKKPTTQIVHEIDIPETIAVSELAQRLTIKVGELIKRLMKMGVMASMNEQIDQDTAVLIVEELGHKANLVSENDIEHALEKSLETAGELTTRAPVVTVMGHVDHGKTSLLDYIREAKVAAGEAGGITQHIGAYRVTTSRGEITFLDTPGHAAFTAMRARGAKATDVVILVVAADDGVMPQTEEAIMHARAAEVPIVVAINKCDKPSADPDRVTNELVAKGVIPEAYGGDTQFVQVSAHTGQGIDELLEAISLQAEVLELTAVTNAAAKGVVIEARVDKGRGTVATVLVQQGTLKQGDLILAGQSYGRVRAMVNERGEQVKEAGPSTPVEILGLDMPPSAGDDFVVLDDERKAREVAAFRAEKERKEKLARFQAAKLENMFSNMEAGQKKTLTVVIKADVRGSLEAIQASLADIGNDEVQVNVISSGIGGITENDVNLAVTSGAIIVGFNVRADGATRRLAETEGVDIRYYSIIYQLLDEVKAALSGMLDPERVETIVGIANVREVFNSPKFGQVAGCMVVEGTVYRNKPIRVLRDNVVIFTGELESLRRFKDDVNEVRNGFECGIGVKNYDVKVGDQIEVYEVKEVARQL.

Disordered stretches follow at residues 160-179 (EPVEAAVDTSAPTRFSFTDG) and 208-301 (AKRA…AAAP). A compositionally biased stretch (basic and acidic residues) spans 208 to 227 (AKRAAEEAKRTQPRAEKPAD). Basic residues-rich tracts occupy residues 263 to 272 (GHGHKKHHHG) and 288 to 301 (KRGAGKAVKKAAAP). Residues 431–600 (TRAPVVTVMG…SLQAEVLELT (170 aa)) form the tr-type G domain. Positions 440–447 (GHVDHGKT) are G1. A GTP-binding site is contributed by 440–447 (GHVDHGKT). The interval 465 to 469 (GITQH) is G2. Residues 486-489 (DTPG) are G3. Residues 486 to 490 (DTPGH) and 540 to 543 (NKCD) each bind GTP. Residues 540–543 (NKCD) are G4. The tract at residues 576-578 (SAH) is G5.

The protein belongs to the TRAFAC class translation factor GTPase superfamily. Classic translation factor GTPase family. IF-2 subfamily.

It localises to the cytoplasm. In terms of biological role, one of the essential components for the initiation of protein synthesis. Protects formylmethionyl-tRNA from spontaneous hydrolysis and promotes its binding to the 30S ribosomal subunits. Also involved in the hydrolysis of GTP during the formation of the 70S ribosomal complex. The polypeptide is Translation initiation factor IF-2 (Cellvibrio japonicus (strain Ueda107) (Pseudomonas fluorescens subsp. cellulosa)).